Consider the following 338-residue polypeptide: MNPFHQRHFLRLLDFSSAEIHALLKLAAELKSTKKSGTEKALLTGKNIVLIFEKDSTRTRCSFEVAAYDQGANITYLGPSGNQIGHKESIKDTARILGRMYDGIQYRGYAQTIVESLAKYAGVPVWNGLTDEFHPTQLLADLLTIQEHQPEKPLSEIKFAYLGDARNNMGNTMLEAAALTGMDVRLIAPEKYWPNAALVTECQKLAEKTGGKITLTENITEGVKNTDFLYTDVWVSMGEPKDVWQQRVHLLKPYQVNMDVVSMTGNPQVKFLHCLPAFHDEETALGKQLAAEFNMYGGLEVTNEVFESEHSIVFDQGENRLHTIKAVMVATLANDLKI.

Carbamoyl phosphate-binding positions include 56–59 (STRT), Gln83, Arg107, and 134–137 (HPTQ). L-ornithine is bound by residues Asn168, Asp232, and 236–237 (SM). Carbamoyl phosphate contacts are provided by residues 274–275 (CL) and Arg320.

This sequence belongs to the aspartate/ornithine carbamoyltransferase superfamily. OTCase family.

It is found in the cytoplasm. The catalysed reaction is carbamoyl phosphate + L-ornithine = L-citrulline + phosphate + H(+). It participates in amino-acid biosynthesis; L-arginine biosynthesis; L-arginine from L-ornithine and carbamoyl phosphate: step 1/3. Reversibly catalyzes the transfer of the carbamoyl group from carbamoyl phosphate (CP) to the N(epsilon) atom of ornithine (ORN) to produce L-citrulline. This Photorhabdus laumondii subsp. laumondii (strain DSM 15139 / CIP 105565 / TT01) (Photorhabdus luminescens subsp. laumondii) protein is Ornithine carbamoyltransferase.